The chain runs to 43 residues: B melanoma antigen 1 (43 aa).

The first 17 residues, methionine 1–alanine 17, serve as a signal peptide directing secretion.

The protein belongs to the BAGE family. In terms of tissue distribution, not expressed in normal tissues, except in testis. Expressed with significant proportion in melanomas, but also in tumors of various histological origins, such as bladder carcinomas, head and neck squamous cell carcinomas, lung and breast carcinomas. Not expressed in renal, colorectal and prostatic carcinomas, leukemias and lymphomas. More frequently expressed in metastatic melanomas than in primary melanomas.

The protein resides in the secreted. Functionally, unknown. Antigen recognized on a melanoma by autologous cytolytic T-lymphocytes. The protein is B melanoma antigen 1 (BAGE) of Homo sapiens (Human).